Here is a 161-residue protein sequence, read N- to C-terminus: Nucleotide-binding protein Bcenmc03_2579 (161 aa).

This sequence belongs to the YajQ family.

Nucleotide-binding protein. The chain is Nucleotide-binding protein Bcenmc03_2579 from Burkholderia orbicola (strain MC0-3).